Consider the following 427-residue polypeptide: Nuclear distribution protein PAC1-2 (427 aa).

Residues 8–40 (QKDDLNKSIAEYLYAQDLTEIADSLCARLSLDY) enclose the LisH domain. Residues 58 to 82 (SVIRLQKKLIESENRYTALQEDIAA) are a coiled coil. 7 WD repeats span residues 106-147 (SHRA…RTLK), 149-187 (HTRE…NAGY), 194-233 (GHEH…CIRT), 236-275 (GHED…MKME), 278-336 (GHGH…ELRT), 339-378 (GHND…CMXV), and 381-420 (AHSH…SRIM).

The protein belongs to the WD repeat LIS1/nudF family. As to quaternary structure, self-associates. Interacts with NDL1 and dynein.

It is found in the cytoplasm. It localises to the cytoskeleton. The protein resides in the spindle pole. Functionally, positively regulates the activity of the minus-end directed microtubule motor protein dynein. May enhance dynein-mediated microtubule sliding by targeting dynein to the microtubule plus end. Required for nuclear migration during vegetative growth as well as development. Required for retrograde early endosome (EE) transport from the hyphal tip. Required for localization of dynein to the mitotic spindle poles. Recruits additional proteins to the dynein complex at SPBs. In Postia placenta (strain ATCC 44394 / Madison 698-R) (Brown rot fungus), this protein is Nuclear distribution protein PAC1-2.